Consider the following 370-residue polypeptide: 3-isopropylmalate dehydrogenase (370 aa).

77-90 lines the NAD(+) pocket; the sequence is GPKWDAVPYDARPE. Residues arginine 97, arginine 107, arginine 135, and aspartate 226 each contribute to the substrate site. Mg(2+) contacts are provided by aspartate 226, aspartate 250, and aspartate 254. 290-302 contributes to the NAD(+) binding site; that stretch reads GSAPDIAGKGLAN.

Belongs to the isocitrate and isopropylmalate dehydrogenases family. LeuB type 1 subfamily. As to quaternary structure, homodimer. The cofactor is Mg(2+). Mn(2+) serves as cofactor.

The protein localises to the cytoplasm. It catalyses the reaction (2R,3S)-3-isopropylmalate + NAD(+) = 4-methyl-2-oxopentanoate + CO2 + NADH. The protein operates within amino-acid biosynthesis; L-leucine biosynthesis; L-leucine from 3-methyl-2-oxobutanoate: step 3/4. In terms of biological role, catalyzes the oxidation of 3-carboxy-2-hydroxy-4-methylpentanoate (3-isopropylmalate) to 3-carboxy-4-methyl-2-oxopentanoate. The product decarboxylates to 4-methyl-2 oxopentanoate. This Rhodopseudomonas palustris (strain HaA2) protein is 3-isopropylmalate dehydrogenase.